A 689-amino-acid chain; its full sequence is Glycine--tRNA ligase beta subunit (689 aa).

It belongs to the class-II aminoacyl-tRNA synthetase family. In terms of assembly, tetramer of two alpha and two beta subunits.

The protein localises to the cytoplasm. It catalyses the reaction tRNA(Gly) + glycine + ATP = glycyl-tRNA(Gly) + AMP + diphosphate. This Shewanella pealeana (strain ATCC 700345 / ANG-SQ1) protein is Glycine--tRNA ligase beta subunit.